A 209-amino-acid polypeptide reads, in one-letter code: FMN-dependent NADH:quinone oxidoreductase 2 (209 aa).

Residues Ser-9, 15–17, and 97–100 each bind FMN; these read SVS and MWNF.

The protein belongs to the azoreductase type 1 family. Homodimer. It depends on FMN as a cofactor.

The enzyme catalyses 2 a quinone + NADH + H(+) = 2 a 1,4-benzosemiquinone + NAD(+). It carries out the reaction N,N-dimethyl-1,4-phenylenediamine + anthranilate + 2 NAD(+) = 2-(4-dimethylaminophenyl)diazenylbenzoate + 2 NADH + 2 H(+). Functionally, quinone reductase that provides resistance to thiol-specific stress caused by electrophilic quinones. Its function is as follows. Also exhibits azoreductase activity. Catalyzes the reductive cleavage of the azo bond in aromatic azo compounds to the corresponding amines. This Pseudomonas syringae pv. tomato (strain ATCC BAA-871 / DC3000) protein is FMN-dependent NADH:quinone oxidoreductase 2.